Here is a 601-residue protein sequence, read N- to C-terminus: Keratin, type II cytoskeletal 5 (601 aa).

A head region spans residues 1–168 (MSRQSTVSFR…DPTIQRVRTE (168 aa)). Phosphoserine is present on residues S5, S8, S16, and S21. T24 bears the Phosphothreonine; by CDK1 mark. Residues S26, S36, S50, S64, S71, and S75 each carry the phosphoserine modification. A Phosphothreonine; by CDK1 modification is found at T152. A Phosphothreonine; by AURKB modification is found at T167. The coil 1A stretch occupies residues 169–204 (EREQIKTLNNKFASFIDKVRFLEQQNKVLDTKWALL). The 314-residue stretch at 169–482 (EREQIKTLNN…KLLEGEECRL (314 aa)) folds into the IF rod domain. Residues 205-223 (QEQGTKTVRQNLEPLLEQY) form a linker 1 region. Residues 224–316 (INNLRRQLDG…FFDAELSQMQ (93 aa)) form a coil 1B region. Residues 317–339 (THVSDTSVVLSMDNNRSLDLDSI) are linker 12. The segment at 340–478 (IAEVKAQYED…ATYRKLLEGE (139 aa)) is coil 2. Positions 479 to 601 (ECRLSGEGVG…TSSSRKSFKS (123 aa)) are tail. The interval 576-601 (FGSGGGSSSSVKFVSTTSSSRKSFKS) is disordered. A compositionally biased stretch (low complexity) spans 583 to 601 (SSSVKFVSTTSSSRKSFKS).

Belongs to the intermediate filament family. As to quaternary structure, heterodimer of a type I and a type II keratin. Heterodimer with type I keratin KRT25 leading to the formation of keratin intermediate filament (KIF) network. Forms a heterodimer (via 2B domains) with KRT14 (via 2B domains). Interacts with TCHP. Interacts with EPPK1. Interacts with AMELX. Interacts with PKP1 (via N-terminus) and PKP2. Post-translationally, phosphorylated by CDK1, AURKB and Rho-kinase, phosphorylation is regulated by the cell cycle. Thr-24 phosphorylation, mediated by CDK1, peaks during prometaphase or metaphase cells with phosphorylated filamentous structures evident throughout the cytoplasm early mitosis. CDK1 phosphorylates Thr-24 in mitotic cells at the site of injury. In terms of processing, O-glycosylated.

The protein localises to the cytoplasm. In terms of biological role, required for the formation of keratin intermediate filaments in the basal epidermis and maintenance of the skin barrier in response to mechanical stress. Regulates the recruitment of Langerhans cells to the epidermis, potentially by modulation of the abundance of macrophage chemotactic cytokines, macrophage inflammatory cytokines and CTNND1 localization in keratinocytes. The polypeptide is Keratin, type II cytoskeletal 5 (Bos taurus (Bovine)).